The following is a 294-amino-acid chain: 33 kDa chaperonin (294 aa).

Intrachain disulfides connect Cys-239–Cys-241 and Cys-272–Cys-275.

It belongs to the HSP33 family. Post-translationally, under oxidizing conditions two disulfide bonds are formed involving the reactive cysteines. Under reducing conditions zinc is bound to the reactive cysteines and the protein is inactive.

It localises to the cytoplasm. Functionally, redox regulated molecular chaperone. Protects both thermally unfolding and oxidatively damaged proteins from irreversible aggregation. Plays an important role in the bacterial defense system toward oxidative stress. This is 33 kDa chaperonin from Listeria welshimeri serovar 6b (strain ATCC 35897 / DSM 20650 / CCUG 15529 / CIP 8149 / NCTC 11857 / SLCC 5334 / V8).